Here is a 79-residue protein sequence, read N- to C-terminus: Cytochrome b (79 aa).

3 helical membrane-spanning segments follow: residues 1-7, 31-52, and 67-79; these read TALLLAM, WLIR…YLHI, and WNIG…TLMA. Residues histidine 37 and histidine 51 each coordinate heme b.

It belongs to the cytochrome b family. The cytochrome bc1 complex contains 11 subunits: 3 respiratory subunits (MT-CYB, CYC1 and UQCRFS1), 2 core proteins (UQCRC1 and UQCRC2) and 6 low-molecular weight proteins (UQCRH/QCR6, UQCRB/QCR7, UQCRQ/QCR8, UQCR10/QCR9, UQCR11/QCR10 and a cleavage product of UQCRFS1). This cytochrome bc1 complex then forms a dimer. Heme b serves as cofactor.

It localises to the mitochondrion inner membrane. In terms of biological role, component of the ubiquinol-cytochrome c reductase complex (complex III or cytochrome b-c1 complex) that is part of the mitochondrial respiratory chain. The b-c1 complex mediates electron transfer from ubiquinol to cytochrome c. Contributes to the generation of a proton gradient across the mitochondrial membrane that is then used for ATP synthesis. This is Cytochrome b (MT-CYB) from Corcorax melanoramphos (White-winged chough).